Reading from the N-terminus, the 421-residue chain is E3 ubiquitin-protein ligase RMD5 (421 aa).

In terms of domain architecture, CTLH spans 176–236 (EFIEMGQIVH…QIVKHGNPVE (61 aa)). Residues 361 to 404 (CPVLKEETTTENPPYSLACHHIISKKALDRLSKNGTITFKCPYC) form an RING-Gid-type zinc finger.

The protein belongs to the RMD5/GID2 family. As to quaternary structure, identified in the GID/CTLH complex. In the absence of stress, the complex exists as an inactive anticipatory complex (GID(Ant)), composed of VID30/GID1, the E3 ubiquitin-ligase RMD5/GID2, VID28/GID5, GID8, and the RING-like subunit FYV10/GID9, awaiting a substrate receptor to form the active E3 ligase complex. When cells are shifted to glucose-containing medium, the substrate receptor VID24/GID4 is induced and becomes part of the complex, named GID(SR4). Additionally, GID7 transforms the GID(SR4) E3 ligase core into a higher-order supramolecular assembly (Chelator-GID(SR4)) specifically tailored for FBP1 ubiquitination. Under osmotic or heat stress, the substrate receptor GID10 is induced and becomes part of the complex, named GID(SR10). Within the GID complex, interacts directly with GID8, FYV10/GID9 and VID28/GID5.

Its subcellular location is the cytoplasm. The enzyme catalyses S-ubiquitinyl-[E2 ubiquitin-conjugating enzyme]-L-cysteine + [acceptor protein]-L-lysine = [E2 ubiquitin-conjugating enzyme]-L-cysteine + N(6)-ubiquitinyl-[acceptor protein]-L-lysine.. It functions in the pathway protein modification; protein ubiquitination. In terms of biological role, E3 ubiquitin-protein ligase component of the GID E3 ligase complex recruiting N termini and catalyzing ubiquitination of proteins targeted for degradation. GID E3 is regulated through assembly with interchangeable N-degron-binding substrate receptors induced by distinct environmental perturbations. Required for the adaptation to the presence of glucose in the growth medium; mediates in association with the substrate receptor VID24/GID4 the degradation of enzymes involved in gluconeogenesis when cells are shifted to glucose-containing medium. Required for proteasome-dependent catabolite degradation of fructose-1,6-bisphosphatase (FBP1), malate dehydrogenase (MDH2), and other gluconeogenic enzymes. This is E3 ubiquitin-protein ligase RMD5 from Saccharomyces cerevisiae (strain ATCC 204508 / S288c) (Baker's yeast).